A 122-amino-acid chain; its full sequence is Large ribosomal subunit protein uL18 (122 aa).

Belongs to the universal ribosomal protein uL18 family. In terms of assembly, part of the 50S ribosomal subunit; part of the 5S rRNA/L5/L18/L25 subcomplex. Contacts the 5S and 23S rRNAs.

Its function is as follows. This is one of the proteins that bind and probably mediate the attachment of the 5S RNA into the large ribosomal subunit, where it forms part of the central protuberance. This is Large ribosomal subunit protein uL18 from Desulforamulus reducens (strain ATCC BAA-1160 / DSM 100696 / MI-1) (Desulfotomaculum reducens).